Here is a 179-residue protein sequence, read N- to C-terminus: Large ribosomal subunit protein uL6 (179 aa).

This sequence belongs to the universal ribosomal protein uL6 family. Part of the 50S ribosomal subunit.

This protein binds to the 23S rRNA, and is important in its secondary structure. It is located near the subunit interface in the base of the L7/L12 stalk, and near the tRNA binding site of the peptidyltransferase center. This Synechococcus sp. (strain WH7803) protein is Large ribosomal subunit protein uL6.